The following is a 1845-amino-acid chain: Collagen alpha-1(XXVII) chain (1845 aa).

A signal peptide spans 1-39 (MGTGFARGARGTAASGPGGGFLFAWILVSFTCHLASTQG). A propeptide spans 40 to 609 (APEDVDVLQR…LGPTPFPMLM (570 aa)) (N-terminal propeptide). The 166-residue stretch at 72–237 (PSGFIFTQRA…NYCAHLRERC (166 aa)) folds into the Laminin G-like domain. N-linked (GlcNAc...) asparagine glycosylation is present at asparagine 272. 4 disordered regions span residues 299-478 (TKPL…VPKT), 502-572 (PPLG…RPST), 608-774 (LMGP…MGRP), and 827-1608 (LMGG…HPIQ). The segment covering 312–323 (HSSSQTPLSPAK) has biased composition (polar residues). Composition is skewed to low complexity over residues 327–343 (RKTPSPSSSASLANSTR) and 356–372 (TTTSPTKRSPTKPSVSP). N-linked (GlcNAc...) asparagine glycosylation is present at asparagine 340. Residues 429–439 (PRPPVPSPQPL) show a composition bias toward pro residues. Positions 444–454 (GLSKKFTNPTV) are enriched in polar residues. Over residues 554–564 (SARDASPRDLT) the composition is skewed to basic and acidic residues. Collagen-like domains follow at residues 610–664 (GPPG…GDPG), 673–732 (GAKG…PGPV), 742–801 (GYIG…PGPP), 817–876 (GYPG…PGPL), 877–936 (GKAG…EGPM), 937–996 (GPPG…VGEK), 997–1038 (GDRG…PGSR), 1039–1096 (GLPG…GAKG), 1117–1176 (GSQG…PGLE), 1177–1236 (GDHG…QGEK), and 1240–1299 (GAKG…NGHK). The segment at 610–1603 (GPPGSKGDCG…RGRPGPPGPP (994 aa)) is triple-helical. Pro residues predominate over residues 639–654 (RGPPGPYGNPGPPGPP). Composition is skewed to low complexity over residues 677–690 (NMGLPGLSGNPGPL) and 699–719 (PGAAGHPGEQGQPGPEGSPGA). Positions 865–874 (GLPGGRGKPG) are enriched in gly residues. The segment covering 896–909 (FPGDIGPPGDNGPE) has biased composition (low complexity). The span at 1018–1027 (GTPGGIGNPG) shows a compositional bias: gly residues. Low complexity-rich tracts occupy residues 1074 to 1086 (RGRPGQPGQQGAA), 1112 to 1122 (LPGEPGSQGPQ), and 1152 to 1167 (KGDLGPLGPPGEQGLI). Composition is skewed to basic and acidic residues over residues 1187 to 1212 (LKGDRGDPGPDGEHGEKGQEGLKGED) and 1226 to 1238 (REGKPGKQGEKGQ). Basic and acidic residues-rich tracts occupy residues 1311–1323 (KGEKGDQGEDGKT) and 1335–1345 (PVGDRGDRGEP). Positions 1325 to 1384 (GPPGPPGDRGPVGDRGDRGEPGDPGYPGQEGVQGLRGEPGQQGQPGHPGPRGRPGPKGSK) constitute a Collagen-like 12 domain. 3 stretches are compositionally biased toward low complexity: residues 1360–1369 (RGEPGQQGQP), 1395–1422 (KAGPSGRRGTQGLQGLPGPRGVVGRQGP), and 1438–1465 (PGYQGDQGNDGDPGPVGPAGRRGNPGVA). Collagen-like domains lie at 1424 to 1483 (GTAG…SGLP), 1484 to 1543 (GQLG…KGIQ), and 1544 to 1603 (GPRG…PGPP). A compositionally biased stretch (low complexity) spans 1557 to 1572 (IIGPPGMLGPSGLPGP). The segment covering 1588-1605 (RGPPGPRGRPGPPGPPWH) has biased composition (pro residues). A propeptide spans 1607 to 1845 (IQFQQDDLGA…RLEVGPACFL (239 aa)) (C-terminal propeptide). A Fibrillar collagen NC1 domain is found at 1645-1845 (GEIFKTLHYL…RLEVGPACFL (201 aa)). 3 cysteine pairs are disulfide-bonded: cysteine 1675–cysteine 1707, cysteine 1716–cysteine 1843, and cysteine 1752–cysteine 1796. Residues aspartate 1693, asparagine 1695, cysteine 1698, and aspartate 1701 each coordinate Ca(2+). A glycan (N-linked (GlcNAc...) asparagine) is linked at asparagine 1754.

This sequence belongs to the fibrillar collagen family. In terms of tissue distribution, highly expressed in cartilage, eye and ear.

Its subcellular location is the secreted. The protein localises to the extracellular space. The protein resides in the extracellular matrix. Functionally, plays a role during the calcification of cartilage and the transition of cartilage to bone. In Mus musculus (Mouse), this protein is Collagen alpha-1(XXVII) chain (Col27a1).